Reading from the N-terminus, the 883-residue chain is MNEQYSALRSNVSMLGKVLGETIKDALGEHILERVETIRKLSKSSRAGNDANRQELLTTLQNLSNDELLPVARAFSQFLNLANTAEQYHSISPKGEAASNPEVIARTLRKLKNQPELSEDTIKKAVESLSLELVLTAHPTEITRRTLIHKMVEVNACLKQLDNKDIADYEHNQLMRRLRQLIAQSWHTDEIRKLRPSPVDEAKWGFAVVENSLWQGVPNYLRELNEQLEENLGYKLPVEFVPVRFTSWMGGDRDGNPNVTADITRHVLLLSRWKATDLFLKDIQVLVSELSMVEATPELLALVGEEGAAEPYRYLMKNLRSRLMATQAWLEARLKGEELPKPEGLLTQNEELWEPLYACYQSLQACGMGIIANGDLLDTLRRVKCFGVPLVRIDIRQESTRHTEALGELTRYLGIGDYESWSEADKQAFLIRELNSKRPLLPRNWQPSAETREVLDTCQVIAEAPQGSIAAYVISMAKTPSDVLAVHLLLKEAGIGFAMPVAPLFETLDDLNNANDVMTQLLNIDWYRGLIQGKQMVMIGYSDSAKDAGVMAASWAQYQAQDALIKTCEKAGIELTLFHGRGGSIGRGGAPAHAALLSQPPGSLKGGLRVTEQGEMIRFKYGLPEITVSSLSLYTGAILEANLLPPPEPKESWRRIMDELSVISCDVYRGYVRENKDFVPYFRSATPEQELGKLPLGSRPAKRRPTGGVESLRAIPWIFAWTQNRLMLPAWLGAGTALQKVVEDGKQSELEAMCRDWPFFSTRLGMLEMVFAKADLWLAEYYDQRLVDKALWPLGKELRNLQEEDIKVVLAIANDSHLMADLPWIAESIQLRNIYTDPLNVLQAELLHRSRQAEKEGQEPDPRVEQALMVTIAGIAAGMRNTG.

Catalysis depends on residues His138 and Lys546.

It belongs to the PEPCase type 1 family. The cofactor is Mg(2+).

It catalyses the reaction oxaloacetate + phosphate = phosphoenolpyruvate + hydrogencarbonate. Forms oxaloacetate, a four-carbon dicarboxylic acid source for the tricarboxylic acid cycle. The chain is Phosphoenolpyruvate carboxylase from Escherichia coli O127:H6 (strain E2348/69 / EPEC).